We begin with the raw amino-acid sequence, 428 residues long: GTPase Obg (428 aa).

Positions 1–158 (MFVDQVKIYV…RDVILELKVL (158 aa)) constitute an Obg domain. A disordered region spans residues 117–145 (ARGGRGGRGNSRFATPTNPAPEIAENGEP). One can recognise an OBG-type G domain in the interval 159-329 (ADVGLVGFPS…LLFEVANLLE (171 aa)). Residues 165–172 (GFPSVGKS), 190–194 (FTTIV), 212–215 (DLPG), 282–285 (NKMD), and 310–312 (SAV) each bind GTP. Mg(2+)-binding residues include S172 and T192. The OCT domain occupies 350 to 428 (KLETEGVKFD…ILEYEFEFID (79 aa)).

The protein belongs to the TRAFAC class OBG-HflX-like GTPase superfamily. OBG GTPase family. In terms of assembly, monomer. It depends on Mg(2+) as a cofactor.

It localises to the cytoplasm. Its function is as follows. An essential GTPase which binds GTP, GDP and possibly (p)ppGpp with moderate affinity, with high nucleotide exchange rates and a fairly low GTP hydrolysis rate. Plays a role in control of the cell cycle, stress response, ribosome biogenesis and in those bacteria that undergo differentiation, in morphogenesis control. This is GTPase Obg from Bacillus cereus (strain ATCC 10987 / NRS 248).